A 574-amino-acid polypeptide reads, in one-letter code: Alpha-mannosidase I MNS5 (574 aa).

At 1–9 (MSCPIHPRR) the chain is on the cytoplasmic side. A helical; Signal-anchor for type II membrane protein transmembrane segment spans residues 10 to 26 (LFLCLLISLTFFVVDPS). Over 27–574 (SQHIEVKKKQ…VGYCGLWNPL (548 aa)) the chain is Lumenal. N-linked (GlcNAc...) asparagine glycosylation is found at asparagine 89, asparagine 107, and asparagine 121. Glutamate 134 serves as the catalytic Proton donor. A glycan (N-linked (GlcNAc...) asparagine) is linked at asparagine 201. Aspartate 274 is a catalytic residue. The N-linked (GlcNAc...) asparagine glycan is linked to asparagine 349. Glutamate 367 acts as the Proton donor in catalysis. Glutamate 388 is an active-site residue. Threonine 471 lines the Ca(2+) pocket. N-linked (GlcNAc...) asparagine glycosylation occurs at asparagine 494.

The protein belongs to the glycosyl hydrolase 47 family. It depends on Ca(2+) as a cofactor.

It localises to the endoplasmic reticulum membrane. Its pathway is protein modification; protein glycosylation. Can convert Man(9)GlcNAc(2) and Man(8)GlcNAc(2) into N-glycans with a terminal alpha-1,6-linked Man residue in the C-branch. Functions in the formation of unique N-glycan structures that are specifically recognized by components of the endoplasmic reticulum-associated degradation (ERAD) machinery, which leads to the degradation of misfolded glycoproteins. Most likely generates N-glycan signal on misfolded glycoproteins that is subsequently recognized by OS9. Required for ERAD of the heavily glycosylated and misfolded BRI1 variants BRI1-5 and BRI1-9. Does not seem to play role in N-glycan processing of correctly folded proteins destined for secretion. The chain is Alpha-mannosidase I MNS5 (MNS5) from Arabidopsis thaliana (Mouse-ear cress).